The sequence spans 453 residues: DNA repair protein RadA (453 aa).

The C4-type zinc-finger motif lies at 11–28 (CNQCGATAPKWLGQCPGC). 93-100 (GDPGIGKS) provides a ligand contact to ATP. The RadA KNRFG motif signature appears at 250-254 (KNRFG). A lon-protease-like region spans residues 349-453 (DVFLSITGGL…TIKDAIRLLL (105 aa)).

It belongs to the RecA family. RadA subfamily.

Its function is as follows. DNA-dependent ATPase involved in processing of recombination intermediates, plays a role in repairing DNA breaks. Stimulates the branch migration of RecA-mediated strand transfer reactions, allowing the 3' invading strand to extend heteroduplex DNA faster. Binds ssDNA in the presence of ADP but not other nucleotides, has ATPase activity that is stimulated by ssDNA and various branched DNA structures, but inhibited by SSB. Does not have RecA's homology-searching function. This is DNA repair protein RadA from Chlamydia pneumoniae (Chlamydophila pneumoniae).